We begin with the raw amino-acid sequence, 188 residues long: Peroxidase B (188 aa).

Belongs to the peroxidase family. Post-translationally, partially N-glycosylated.

Its subcellular location is the secreted. It carries out the reaction 2 a phenolic donor + H2O2 = 2 a phenolic radical donor + 2 H2O. This chain is Peroxidase B, found in Aloe vera (Aloe).